A 2034-amino-acid chain; its full sequence is MTVKEKLLKVKQKFKRGDSSSDVDSGPERDRDEDDSDNESRNTSKTSKSSKKSKSGKSTGTSEMTELSDDGGSDIELLPDDGKSFGKRKLQDTDKPCTWNVLVRIIEAKDVSTGSARVRTIFDGNSKMTRTVTHAIPKWRQNILYTIKNQPLEKLAAKVLTLRLVRPTALGESSVGEFSCYLSEVIHSPDRSVIAKWVALGFPGMDDEEPDDIAYENCGFLKVTLSVYRIDESPPTLIDDDGKEQIWSGAHLIDYTLKIRVFSVEQLIRQMINERKIKKKQRFYVMVQCGAHKTETTMESAFLDEDANIASVKFEQEIYLPIQWPTVISEIIFSLFDKKGRGKTCIGKATLPMKMIYEPGETGYLPTFGPAFLNVFDCERVTRFSIFSRKMRGSQQDGSRFVGRLFIAIDCVEYMEKANAQIMHLDHSPIMEAESICKNLEWYNCFCSMSGLNMINPQFASDPVCIMMSIGSFGSTSNEFRSCNSSTLPAEPNWDGCKYFTMPWGNLRPVAEVNAPWEVIEHRIEMSNVLMKMTNMLDTMIWEVRRIGNKAIDHVSSVGMEALECLEQQIDSASKYLGRINPVSSNALDRHILDYRKEKILKLREHFEKEAFSIDYSDGEVDAKLLRMLLKIRSMTLELAEDVQMTIPPVLIKMMSHGKLIGFAKIPISEIFQSDDEAQSGEWCGRTRAINIQWPTLVDQRNRKREHVAVLHAKMWFGRTDQLTKWKEHVQPADIRRFMEMYEVQTKGLALKWKDEADIYDGKWEKTNEVPLENGWNAVGHWIVMNTRHMFVPKLGQHTVHDKAFEIQKRTEDGTWKHFKYTDCYADELKPKDLDKHAKGWEVGSWAQDKFRNNGDEKGWVYSTNGVFFGSGVLTDREEKVHHNFRKRCIKRPRKHEGYNKELEDFEHFRTTMGNENWEYSPSKKEGPYHDLEDRTDRIRRRRYVREVENKDPDSEDPRFRVYEYQMQTGKWQLRCYIMWGNDLLPVVKNSSRAFVRISFAQYSKQTLLVDNSQNPIWNETVMFKSVLIAGGTRDIMKYPPVVSVEVVGECSNNEEANLGHFETKPNVICGNTDVRGTPQWFPLKFSNGRTRGAVLACFELYSEEDKDLIPLEPKCKHNYKERSEIPTEFRPQFDKFHVQFLCWGVRNLKKHKLLAVRRPFVGLTIGDQEFTLQPLKDVRRDPNFPEPMIVFGEVILPSALELSPPLIINLFDARAFNRQPLVGSCLVSDLHKYVSHIVPKVKSDHAERWEQLDLVITEEFDQIIRMVRVPTLTTDPMVPLDWWSRYYASMSQFHRSPGYPESGMEYVRIFRRPLEQMNGYNNFSDFLDTFPFVKSMKGDFDDPEEKEKAGELKCRLLISKLKKGKPPAAINTVVDFVGPTRCLVRVYIIEANGLISNARKGRVDSYVKLHCGKQNVNLKKNYRSECCDPIFGERVDMTVTIPLEKDLKITVMGKRRILSDQEIGSTTIDLENRLLTKWRATGGLSGQFTVQGELQWRDQMTPMEILKSYCYKMMLSVPKIESRQTERGEEKGITIEKITFWFSEVLHVFENEEIAMLNSQRQKAGKENFSDGSDQQNEDVSDGSWDEEDLEREKEKLKWEKHRSKGKPLKKVTTEKAETADGELRKKAKMRIMGSQLQTIALFILRQMNLVPEHVESRPLFSDKGGRTQKGELRMFVDIFPMEYGAIPAPFNIAPRKPINYQLRIAVMDVRGAIPVKRSFAEPVSDLYVKAFINGMTKGHKTDTHFRVLDGTGEFNWRFLLNFDYNPWEKKVVAYTKNRFFCKPVEELVDPILVIELWDKNKFRKDRLLGDIELDLLDFIEGIGSPSDVGVYSTKKRQRGVKCPKCCTRRGCLCKCCIFCFETKCLCGKRKVKKKPFPKPVLFVEPEGYDDTVNIFESRNLYGWWPMLTEEYPHEEPQNAKKKNDDVGKDPKWIMGLVEMDMLLLTKQEADQEPAGKKRSEPNHSPFLEKPDRKSWANSWLVSRIKPCIKYFWHYYGLQILLWLIIIVILILTIFVLLHTWPTILAEIIKAIF.

Residues 1 to 80 (MTVKEKLLKV…GGSDIELLPD (80 aa)) form a disordered region. The Cytoplasmic portion of the chain corresponds to 1–1998 (MTVKEKLLKV…CIKYFWHYYG (1998 aa)). Residues 66–79 (ELSDDGGSDIELLP) show a composition bias toward acidic residues. 4 consecutive C2 domains span residues 229–367 (RIDE…YLPT), 954–1082 (DSED…PQWF), 1120–1246 (YKER…KSDH), and 1363–1484 (KKGK…ATGG). A disordered region spans residues 1563–1619 (QKAGKENFSDGSDQQNEDVSDGSWDEEDLEREKEKLKWEKHRSKGKPLKKVTTEKAE). Positions 1577 to 1591 (QNEDVSDGSWDEEDL) are enriched in acidic residues. The span at 1600 to 1611 (WEKHRSKGKPLK) shows a compositional bias: basic residues. A C2 5 domain is found at 1684–1831 (EYGAIPAPFN…EGIGSPSDVG (148 aa)). Positions 1953–1972 (QEPAGKKRSEPNHSPFLEKP) are disordered. A helical membrane pass occupies residues 1999–2019 (LQILLWLIIIVILILTIFVLL). Residues 2020–2034 (HTWPTILAEIIKAIF) are Extracellular-facing.

This sequence belongs to the ferlin family. In terms of tissue distribution, exclusively expressed in the testis.

The protein localises to the membrane. Required for the fusion of the membranous organelles (MOs) with the plasma membrane, a process essential in spermiogenesis. In Caenorhabditis elegans, this protein is Sperm vesicle fusion protein fer-1 (fer-1).